A 222-amino-acid polypeptide reads, in one-letter code: Transcriptional regulatory protein BasR (222 aa).

The 115-residue stretch at 2–116 (KILIVEDDTL…ELHARIRALL (115 aa)) folds into the Response regulatory domain. Position 51 is a 4-aspartylphosphate (aspartate 51). The segment at residues 124–218 (ESELIVGNLT…VRGFGYMLVA (95 aa)) is a DNA-binding region (ompR/PhoB-type).

As to quaternary structure, homodimer. Post-translationally, phosphorylated by BasS.

It is found in the cytoplasm. In terms of biological role, member of the two-component regulatory system BasS/BasR. BasR induces the transcription of the ugd, ais, arnBCADTEF and eptA-basRS loci, all involved in resistance to polymyxin. In Escherichia coli (strain K12), this protein is Transcriptional regulatory protein BasR (basR).